A 235-amino-acid polypeptide reads, in one-letter code: Large ribosomal subunit protein uL1 (235 aa).

It belongs to the universal ribosomal protein uL1 family. As to quaternary structure, part of the 50S ribosomal subunit.

Its function is as follows. Binds directly to 23S rRNA. The L1 stalk is quite mobile in the ribosome, and is involved in E site tRNA release. Functionally, protein L1 is also a translational repressor protein, it controls the translation of the L11 operon by binding to its mRNA. The chain is Large ribosomal subunit protein uL1 from Fervidobacterium nodosum (strain ATCC 35602 / DSM 5306 / Rt17-B1).